The chain runs to 315 residues: HPr kinase/phosphorylase (315 aa).

Active-site residues include His-140 and Lys-161. 155 to 162 (GDSGVGKS) contacts ATP. Position 162 (Ser-162) interacts with Mg(2+). Asp-179 serves as the catalytic Proton acceptor; for phosphorylation activity. Proton donor; for dephosphorylation activity. The segment at 203–212 (LEIRGIGIID) is important for the catalytic mechanism of both phosphorylation and dephosphorylation. Glu-204 serves as a coordination point for Mg(2+). Arg-245 is a catalytic residue. Residues 266–271 (PVKTGR) are important for the catalytic mechanism of dephosphorylation.

It belongs to the HPrK/P family. In terms of assembly, homohexamer. It depends on Mg(2+) as a cofactor.

It carries out the reaction [HPr protein]-L-serine + ATP = [HPr protein]-O-phospho-L-serine + ADP + H(+). The catalysed reaction is [HPr protein]-O-phospho-L-serine + phosphate + H(+) = [HPr protein]-L-serine + diphosphate. Its function is as follows. Catalyzes the ATP- as well as the pyrophosphate-dependent phosphorylation of a specific serine residue in HPr, a phosphocarrier protein of the phosphoenolpyruvate-dependent sugar phosphotransferase system (PTS). HprK/P also catalyzes the pyrophosphate-producing, inorganic phosphate-dependent dephosphorylation (phosphorolysis) of seryl-phosphorylated HPr (P-Ser-HPr). The two antagonistic activities of HprK/P are regulated by several intracellular metabolites, which change their concentration in response to the absence or presence of rapidly metabolisable carbon sources (glucose, fructose, etc.) in the growth medium. Therefore, by controlling the phosphorylation state of HPr, HPrK/P is a sensor enzyme that plays a major role in the regulation of carbon metabolism and sugar transport: it mediates carbon catabolite repression (CCR), and regulates PTS-catalyzed carbohydrate uptake and inducer exclusion. This is HPr kinase/phosphorylase from Lactiplantibacillus plantarum (strain ATCC BAA-793 / NCIMB 8826 / WCFS1) (Lactobacillus plantarum).